The following is an 83-amino-acid chain: Cobrotoxin homolog (83 aa).

The signal sequence occupies residues 1-21 (METLLLTLLVVTIVCLDLGYT). 4 cysteine pairs are disulfide-bonded: Cys-24–Cys-45, Cys-38–Cys-62, Cys-64–Cys-75, and Cys-76–Cys-81.

Belongs to the three-finger toxin family. Short-chain subfamily. Type I alpha-neurotoxin sub-subfamily. Expressed by the venom gland.

The protein localises to the secreted. Functionally, binds to muscle nicotinic acetylcholine receptor (nAChR) and inhibit acetylcholine from binding to the receptor, thereby impairing neuromuscular transmission. The protein is Cobrotoxin homolog of Naja naja (Indian cobra).